A 562-amino-acid chain; its full sequence is ATP-dependent RNA helicase dbp2 (562 aa).

Residues 132–160 (ETFDEAGFPRYVMDEVKAQGFPAPTAIQS) carry the Q motif motif. Positions 163 to 338 (WPMALSGRDV…ADFLTDFIQV (176 aa)) constitute a Helicase ATP-binding domain. 176–183 (AETGSGKT) is a binding site for ATP. The DEAD box signature appears at 286–289 (DEAD). The 146-residue stretch at 370–515 (HLEKIMEGRE…QIDPRLAEMA (146 aa)) folds into the Helicase C-terminal domain. The tract at residues 526–548 (GGYRGRGGGGWRGGRGGGGGGGS) is RNA-binding RGG-box. Gly residues predominate over residues 536-550 (WRGGRGGGGGGGSVG). The segment at 536–562 (WRGGRGGGGGGGSVGGANALPLNNRRW) is disordered.

Belongs to the DEAD box helicase family. DDX5/DBP2 subfamily. In terms of assembly, associates with polysomes.

It localises to the cytoplasm. The protein resides in the nucleus. The enzyme catalyses ATP + H2O = ADP + phosphate + H(+). ATP-dependent RNA helicase involved nonsense-mediated mRNA decay and ribosome biogenesis through rRNA processing. This is ATP-dependent RNA helicase dbp2 (drh-1) from Neurospora crassa (strain ATCC 24698 / 74-OR23-1A / CBS 708.71 / DSM 1257 / FGSC 987).